The primary structure comprises 557 residues: Arginine--tRNA ligase (557 aa).

The 'HIGH' region signature appears at 132–142; sequence ANPTGDLHLGH.

The protein belongs to the class-I aminoacyl-tRNA synthetase family. Monomer.

The protein resides in the cytoplasm. It carries out the reaction tRNA(Arg) + L-arginine + ATP = L-arginyl-tRNA(Arg) + AMP + diphosphate. This chain is Arginine--tRNA ligase, found in Geobacillus kaustophilus (strain HTA426).